The following is a 1470-amino-acid chain: Collagen alpha-1(XVII) chain (1470 aa).

Disordered stretches follow at residues 1-155 (MDVT…PSTR), 167-193 (KGSRSASASPTRNTSNTLPIPKKGTVE), and 422-452 (SAENHGYDRGGGGGRGKGGGAGGGGGGGGAS). Over 1-476 (MDVTKKSKRD…CGSCCSWWKW (476 aa)) the chain is Cytoplasmic. Positions 1–573 (MDVTKKSKRD…MTEQENGNLR (573 aa)) are nonhelical region (NC16). Residues 9–19 (RDGTEVTERIV) are compositionally biased toward basic and acidic residues. The span at 60–74 (GSSGYINSSGSIRGN) shows a compositional bias: low complexity. 3 stretches are compositionally biased toward polar residues: residues 75–96 (ASTSSYRRTHSPASTLPNSPGS), 111–120 (EGSSSGNSSP), and 170–184 (RSASASPTRNTSNTL). Residues 146–231 (RLQSASPSTR…WSSTLPAGSS (86 aa)) are necessary for interaction with DST and for the recruitment of DST to hemidesmosome. A compositionally biased stretch (gly residues) spans 430 to 452 (RGGGGGRGKGGGAGGGGGGGGAS). Residues 477 to 497 (LLGLLLTWLLLLGLLFGLIAL) form a helical; Signal-anchor for type II membrane protein membrane-spanning segment. Over 498–1470 (AEEVRKLKAR…RRKRSIAIKP (973 aa)) the chain is Extracellular. Position 551 is a phosphoserine; by CK2 (S551). Disordered regions lie at residues 568–873 (ENGN…FLSS), 885–999 (GVDL…SSSG), 1159–1181 (DYRNIIGPPGPPGPPGMPGNAWS), 1194–1220 (TAGLSSIPGPPGPPGPPGPRGPPGVSA), and 1249–1298 (FIVG…TNGG). The tract at residues 574 to 1456 (GSPGPKGDMG…KGEKGDKGDQ (883 aa)) is triple-helical region. Pro residues predominate over residues 597–609 (PGIPGPLGHPGPE). Low complexity-rich tracts occupy residues 742–755 (EPGAKGAMGPAGAD) and 781–803 (DPGKPGLTGPQGPQGLPGSPGRP). Residues 827–848 (PGPPGPPGAMGPPGPPGTPGPA) are compositionally biased toward pro residues. Over residues 850–873 (PAGLPGQQGPRGEPGLAGDSFLSS) the composition is skewed to low complexity. Composition is skewed to pro residues over residues 891–914 (PPGPPGPRGPPGPSIPGPPGPRGP), 940–949 (PPGPPGPPGP), 982–992 (PPGPPGPPGPP), 1166–1175 (PPGPPGPPGM), 1201–1215 (PGPPGPPGPPGPRGP), and 1253–1262 (PPGPPGPQGP). Residue N1273 is glycosylated (N-linked (GlcNAc...) asparagine). Low complexity predominate over residues 1275-1290 (SSNSSARRGTSYSSST). A glycan (N-linked (GlcNAc...) asparagine) is linked at N1395. Residues 1406-1470 (TYGTIPGPPG…RRKRSIAIKP (65 aa)) form a disordered region. Residues 1434–1443 (PRGPPGPPGP) show a composition bias toward pro residues. A compositionally biased stretch (basic and acidic residues) spans 1446–1455 (NKGEKGDKGD). Residues 1457 to 1470 (VYTGRRKRSIAIKP) are nonhelical region (NC1). The span at 1460–1470 (GRRKRSIAIKP) shows a compositional bias: basic residues.

In terms of assembly, homotrimers of alpha 1(XVII)chains. Interacts (via cytoplasmic region) with ITGB4 (via cytoplasmic region). Interacts (via cytoplasmic region) with DST (via N-terminus). Interacts (via N-terminus) with PLEC. Interacts (via cytoplasmic region) with DSP. Post-translationally, the intracellular/endo domain is disulfide-linked. In terms of processing, prolines at the third position of the tripeptide repeating unit (G-X-Y) are hydroxylated in some or all of the chains. The ectodomain is shedded from the surface of keratinocytes resulting in a 120-kDa soluble form, also named as 120 kDa linear IgA disease antigen homolog. The shedding is mediated by membrane-bound metalloproteases. This cleavage is inhibited by phosphorylation at Ser-551.

The protein resides in the cell junction. It localises to the hemidesmosome. Its subcellular location is the membrane. It is found in the secreted. The protein localises to the extracellular space. The protein resides in the extracellular matrix. It localises to the basement membrane. In terms of biological role, may play a role in the integrity of hemidesmosome and the attachment of basal keratinocytes to the underlying basement membrane. The 120 kDa linear IgA disease antigen homolog is an anchoring filament component involved in dermal-epidermal cohesion. The polypeptide is Collagen alpha-1(XVII) chain (Col17a1) (Mus musculus (Mouse)).